The chain runs to 527 residues: Peptide chain release factor 3 (527 aa).

A tr-type G domain is found at 10-278 (DRRRTFAIIS…TFVENAPAPL (269 aa)). GTP is bound by residues 19–26 (SHPDAGKT), 87–91 (DTPGH), and 141–144 (NKLD).

The protein belongs to the TRAFAC class translation factor GTPase superfamily. Classic translation factor GTPase family. PrfC subfamily.

It localises to the cytoplasm. In terms of biological role, increases the formation of ribosomal termination complexes and stimulates activities of RF-1 and RF-2. It binds guanine nucleotides and has strong preference for UGA stop codons. It may interact directly with the ribosome. The stimulation of RF-1 and RF-2 is significantly reduced by GTP and GDP, but not by GMP. In Geobacter metallireducens (strain ATCC 53774 / DSM 7210 / GS-15), this protein is Peptide chain release factor 3.